Reading from the N-terminus, the 2190-residue chain is Integrator complex subunit 1 (2190 aa).

The tract at residues 1–61 (MNRAKPTTVR…GLPSERKRDA (61 aa)) is disordered. The residue at position 13 (Ser13) is a Phosphoserine. A compositionally biased stretch (polar residues) spans 34–44 (GQANESKTAST). Lys47 carries the N6-acetyllysine modification. Thr83 carries the phosphothreonine modification. Phosphoserine occurs at positions 87, 307, and 924. The tract at residues 922-945 (AASGEEDDEGESKEQKAKKRQRQQ) is disordered. Positions 923 to 932 (ASGEEDDEGE) are enriched in acidic residues. The chain crosses the membrane as a helical span at residues 1159–1179 (TATMHILVVHAMVILLTLGPP). The tract at residues 1311-1334 (SLPPRRDSTEAPKPKSSPEQPIGQ) is disordered. Over residues 1314 to 1323 (PRRDSTEAPK) the composition is skewed to basic and acidic residues. Phosphoserine is present on residues Ser1318, Ser1326, Ser1327, and Ser1395.

It belongs to the Integrator subunit 1 family. As to quaternary structure, component of the Integrator complex, composed of core subunits INTS1, INTS2, INTS3, INTS4, INTS5, INTS6, INTS7, INTS8, INTS9/RC74, INTS10, INTS11/CPSF3L, INTS12, INTS13, INTS14 and INTS15. The core complex associates with protein phosphatase 2A subunits PPP2CA and PPP2R1A, to form the Integrator-PP2A (INTAC) complex. Interacts with ESRRB, ESRRB is not a core component of the Integrator complex and this association is a bridge for the interaction with the multiprotein complex Integrator; attracts the transcriptional machinery.

It is found in the nucleus. It localises to the nucleus membrane. Its function is as follows. Component of the integrator complex, a multiprotein complex that terminates RNA polymerase II (Pol II) transcription in the promoter-proximal region of genes. The integrator complex provides a quality checkpoint during transcription elongation by driving premature transcription termination of transcripts that are unfavorably configured for transcriptional elongation: the complex terminates transcription by (1) catalyzing dephosphorylation of the C-terminal domain (CTD) of Pol II subunit POLR2A/RPB1 and SUPT5H/SPT5, (2) degrading the exiting nascent RNA transcript via endonuclease activity and (3) promoting the release of Pol II from bound DNA. The integrator complex is also involved in terminating the synthesis of non-coding Pol II transcripts, such as enhancer RNAs (eRNAs), small nuclear RNAs (snRNAs), telomerase RNAs and long non-coding RNAs (lncRNAs). Within the integrator complex, INTS1 is involved in the post-termination step: INTS1 displaces INTS3 and the SOSS factors, allowing the integrator complex to return to the closed conformation, ready to bind to the paused elongation complex for another termination cycle. Mediates recruitment of cytoplasmic dynein to the nuclear envelope, probably as component of the integrator complex. In Homo sapiens (Human), this protein is Integrator complex subunit 1.